We begin with the raw amino-acid sequence, 830 residues long: Leucine--tRNA ligase (830 aa).

Residues proline 48–histidine 58 carry the 'HIGH' region motif. Positions lysine 596 to serine 600 match the 'KMSKS' region motif. Lysine 599 contributes to the ATP binding site.

It belongs to the class-I aminoacyl-tRNA synthetase family.

The protein resides in the cytoplasm. It catalyses the reaction tRNA(Leu) + L-leucine + ATP = L-leucyl-tRNA(Leu) + AMP + diphosphate. The chain is Leucine--tRNA ligase from Helicobacter hepaticus (strain ATCC 51449 / 3B1).